The chain runs to 473 residues: Aspartyl/glutamyl-tRNA(Asn/Gln) amidotransferase subunit B (473 aa).

It belongs to the GatB/GatE family. GatB subfamily. Heterotrimer of A, B and C subunits.

It carries out the reaction L-glutamyl-tRNA(Gln) + L-glutamine + ATP + H2O = L-glutaminyl-tRNA(Gln) + L-glutamate + ADP + phosphate + H(+). The enzyme catalyses L-aspartyl-tRNA(Asn) + L-glutamine + ATP + H2O = L-asparaginyl-tRNA(Asn) + L-glutamate + ADP + phosphate + 2 H(+). Functionally, allows the formation of correctly charged Asn-tRNA(Asn) or Gln-tRNA(Gln) through the transamidation of misacylated Asp-tRNA(Asn) or Glu-tRNA(Gln) in organisms which lack either or both of asparaginyl-tRNA or glutaminyl-tRNA synthetases. The reaction takes place in the presence of glutamine and ATP through an activated phospho-Asp-tRNA(Asn) or phospho-Glu-tRNA(Gln). In Wolbachia pipientis subsp. Culex pipiens (strain wPip), this protein is Aspartyl/glutamyl-tRNA(Asn/Gln) amidotransferase subunit B.